We begin with the raw amino-acid sequence, 211 residues long: DNA/RNA-binding protein ALBA2 (211 aa).

The segment covering 84-99 has biased composition (basic and acidic residues); that stretch reads NSGLKKNAKNEDKKSG. Residues 84–121 are disordered; it reads NSGLKKNAKNEDKKSGDEEEEEEEEEEDEENNKNKEAN. The span at 100–113 shows a compositional bias: acidic residues; it reads DEEEEEEEEEEDEE.

It belongs to the histone-like Alba family. As to quaternary structure, identified in a TARE6-associated complex consisting of over 30 proteins and including ALBA1, ALBA2 and ALBA4; the complex binds to the non-coding subtelomeric repeat region TARE6.

The protein resides in the nucleus. It is found in the chromosome. It localises to the telomere. The protein localises to the cytoplasm. In terms of biological role, possesses DNA- and RNA-binding activities. Binds to DNA with relaxed sequence specificity. Associates with the subtelomeric TARE6 repeats. The chain is DNA/RNA-binding protein ALBA2 from Plasmodium falciparum (isolate 3D7).